Consider the following 135-residue polypeptide: S-protein homolog 29 (135 aa).

Positions 1–24 (MKNSSKIFVVLSIILFYVISSCHG) are cleaved as a signal peptide. N-linked (GlcNAc...) asparagine glycosylation occurs at N110.

The protein belongs to the plant self-incompatibility (S1) protein family.

The protein resides in the secreted. The chain is S-protein homolog 29 from Arabidopsis thaliana (Mouse-ear cress).